A 339-amino-acid polypeptide reads, in one-letter code: Ferrochelatase (339 aa).

Residues His202 and Glu283 each contribute to the Fe cation site.

The protein belongs to the ferrochelatase family.

Its subcellular location is the cytoplasm. It carries out the reaction heme b + 2 H(+) = protoporphyrin IX + Fe(2+). It participates in porphyrin-containing compound metabolism; protoheme biosynthesis; protoheme from protoporphyrin-IX: step 1/1. In terms of biological role, catalyzes the ferrous insertion into protoporphyrin IX. This Psychrobacter cryohalolentis (strain ATCC BAA-1226 / DSM 17306 / VKM B-2378 / K5) protein is Ferrochelatase.